The primary structure comprises 1210 residues: ATPase family AAA domain-containing protein At1g05910 (1210 aa).

Positions 1 to 11 (MHPKRSSQGDG) are enriched in polar residues. Disordered stretches follow at residues 1–32 (MHPKRSSQGDGSVTKPVRTSDRLRRRPKLHGR) and 63–291 (LHKG…RTDD). Over residues 97–109 (DYTDSSGAEDEDM) the composition is skewed to acidic residues. Residues 130–146 (SRKDMDAELAPRREGLR) show a composition bias toward basic and acidic residues. Residues 167-226 (DTSEEKDGQDETENGNELDDADDGENEVEAEDEGNGEDEGDGEDEGEEDGDDDEEGDEEQ) show a composition bias toward acidic residues. Positions 227 to 244 (EGRKRYDLRNRAEVRRMP) are enriched in basic and acidic residues. The segment covering 276–286 (GGSRPHKRHRF) has biased composition (basic residues). 422–429 (GPPGTGKT) is a binding site for ATP. Residues 856–883 (LNGKPDGPQPLPELPKVPKEPTGPKPAE) are disordered. The 104-residue stretch at 897–1000 (RLRMCLRDVC…DVVHGMLSQM (104 aa)) folds into the Bromo domain. The span at 1057 to 1070 (DRDYEGLKKPKKTT) shows a compositional bias: basic and acidic residues. The disordered stretch occupies residues 1057–1151 (DRDYEGLKKP…EISSRTESVK (95 aa)). Over residues 1080-1090 (DKSQNQDSGQE) the composition is skewed to polar residues. Basic and acidic residues-rich tracts occupy residues 1108–1123 (DGDREDQSEPPSKEAS) and 1138–1151 (KSDKEISSRTESVK).

It belongs to the AAA ATPase family.

The polypeptide is ATPase family AAA domain-containing protein At1g05910 (Arabidopsis thaliana (Mouse-ear cress)).